Reading from the N-terminus, the 236-residue chain is Ascorbate-specific transmembrane electron transporter 2 (236 aa).

The Cytoplasmic segment spans residues Met1–Thr13. The chain crosses the membrane as a helical span at residues Tyr14 to Phe34. The Cytochrome b561 domain occupies Ala15 to Ile219. The Extracellular segment spans residues Arg35–Asn50. Residues Val51–Tyr71 traverse the membrane as a helical segment. His52 contributes to the heme b binding site. An L-ascorbate-binding site is contributed by Ala67–Pro75. Residues Arg72 to Leu84 are Cytoplasmic-facing. Residues Ile85 to Phe105 traverse the membrane as a helical segment. His86 and His120 together coordinate heme b. Residues Lys106–Trp122 lie on the Extracellular side of the membrane. Leu116–Ile125 contributes to the monodehydro-L-ascorbate radical binding site. A helical transmembrane segment spans residues Ile123 to Phe143. At Phe144–Lys153 the chain is on the cytoplasmic side. The chain crosses the membrane as a helical span at residues Gly154–Ala174. His159 lines the heme b pocket. Over Glu175 to Asn201 the chain is Extracellular. A helical membrane pass occupies residues Phe202–Val222. The Cytoplasmic portion of the chain corresponds to Arg223–Asn236.

The cofactor is heme b.

It localises to the membrane. Two-heme-containing cytochrome. Catalyzes ascorbate-dependent trans-membrane electron transfer by utilizing a concerted H(+)/e(-) transfer mechanism. This is Ascorbate-specific transmembrane electron transporter 2 from Zea mays (Maize).